A 212-amino-acid chain; its full sequence is MNYPHPIIAREGWPFIAIAAVVALLVHFIAGFGFSWLFWLLLIFVVQFFRDPARPIPTQANAVLCPADGRIVAVETAHDPYANREALKISVFMNVFNVHSQRSPVDGAISKVEYFPGAYLNAAVDKASTENERNAVVIEMAGGQTVTSVQIAGLIARRILCYVRAGEPLTRGQRYGFIRFGSRVDVYLPVGSRPRVSIGEKVSASSTILAEL.

The active-site Schiff-base intermediate with substrate; via pyruvic acid is the serine 182. Residue serine 182 is modified to Pyruvic acid (Ser); by autocatalysis.

This sequence belongs to the phosphatidylserine decarboxylase family. PSD-A subfamily. In terms of assembly, heterodimer of a large membrane-associated beta subunit and a small pyruvoyl-containing alpha subunit. It depends on pyruvate as a cofactor. Post-translationally, is synthesized initially as an inactive proenzyme. Formation of the active enzyme involves a self-maturation process in which the active site pyruvoyl group is generated from an internal serine residue via an autocatalytic post-translational modification. Two non-identical subunits are generated from the proenzyme in this reaction, and the pyruvate is formed at the N-terminus of the alpha chain, which is derived from the carboxyl end of the proenzyme. The post-translation cleavage follows an unusual pathway, termed non-hydrolytic serinolysis, in which the side chain hydroxyl group of the serine supplies its oxygen atom to form the C-terminus of the beta chain, while the remainder of the serine residue undergoes an oxidative deamination to produce ammonia and the pyruvoyl prosthetic group on the alpha chain.

It is found in the cell membrane. It catalyses the reaction a 1,2-diacyl-sn-glycero-3-phospho-L-serine + H(+) = a 1,2-diacyl-sn-glycero-3-phosphoethanolamine + CO2. It participates in phospholipid metabolism; phosphatidylethanolamine biosynthesis; phosphatidylethanolamine from CDP-diacylglycerol: step 2/2. Catalyzes the formation of phosphatidylethanolamine (PtdEtn) from phosphatidylserine (PtdSer). The protein is Phosphatidylserine decarboxylase proenzyme of Paraburkholderia phytofirmans (strain DSM 17436 / LMG 22146 / PsJN) (Burkholderia phytofirmans).